A 288-amino-acid polypeptide reads, in one-letter code: Acetyl-coenzyme A carboxylase carboxyl transferase subunit beta (288 aa).

The CoA carboxyltransferase N-terminal domain occupies 32-288 (MWAKCPSCKR…LRLHSLEGWR (257 aa)). Zn(2+) is bound by residues Cys-36, Cys-39, Cys-54, and Cys-57. A C4-type zinc finger spans residues 36–57 (CPSCKRTLYTKEMGAEKICPHC).

This sequence belongs to the AccD/PCCB family. Acetyl-CoA carboxylase is a heterohexamer composed of biotin carboxyl carrier protein (AccB), biotin carboxylase (AccC) and two subunits each of ACCase subunit alpha (AccA) and ACCase subunit beta (AccD). Zn(2+) is required as a cofactor.

It localises to the cytoplasm. The catalysed reaction is N(6)-carboxybiotinyl-L-lysyl-[protein] + acetyl-CoA = N(6)-biotinyl-L-lysyl-[protein] + malonyl-CoA. Its pathway is lipid metabolism; malonyl-CoA biosynthesis; malonyl-CoA from acetyl-CoA: step 1/1. Functionally, component of the acetyl coenzyme A carboxylase (ACC) complex. Biotin carboxylase (BC) catalyzes the carboxylation of biotin on its carrier protein (BCCP) and then the CO(2) group is transferred by the transcarboxylase to acetyl-CoA to form malonyl-CoA. In Enterococcus faecalis (strain ATCC 700802 / V583), this protein is Acetyl-coenzyme A carboxylase carboxyl transferase subunit beta.